The sequence spans 370 residues: tRNA-specific 2-thiouridylase MnmA (370 aa).

Residues 11 to 18 (GMSGGVDS) and methionine 37 contribute to the ATP site. An interaction with target base in tRNA region spans residues 97-99 (NPD). The active-site Nucleophile is the cysteine 102. Cysteine 102 and cysteine 199 are disulfide-bonded. An ATP-binding site is contributed by glycine 126. Residues 149–151 (KDQ) form an interaction with tRNA region. Cysteine 199 functions as the Cysteine persulfide intermediate in the catalytic mechanism. The tract at residues 307 to 308 (RY) is interaction with tRNA.

It belongs to the MnmA/TRMU family.

Its subcellular location is the cytoplasm. It catalyses the reaction S-sulfanyl-L-cysteinyl-[protein] + uridine(34) in tRNA + AH2 + ATP = 2-thiouridine(34) in tRNA + L-cysteinyl-[protein] + A + AMP + diphosphate + H(+). Functionally, catalyzes the 2-thiolation of uridine at the wobble position (U34) of tRNA, leading to the formation of s(2)U34. The polypeptide is tRNA-specific 2-thiouridylase MnmA (Staphylococcus saprophyticus subsp. saprophyticus (strain ATCC 15305 / DSM 20229 / NCIMB 8711 / NCTC 7292 / S-41)).